Here is a 364-residue protein sequence, read N- to C-terminus: Aminomethyltransferase (364 aa).

Belongs to the GcvT family. In terms of assembly, the glycine cleavage system is composed of four proteins: P, T, L and H.

The catalysed reaction is N(6)-[(R)-S(8)-aminomethyldihydrolipoyl]-L-lysyl-[protein] + (6S)-5,6,7,8-tetrahydrofolate = N(6)-[(R)-dihydrolipoyl]-L-lysyl-[protein] + (6R)-5,10-methylene-5,6,7,8-tetrahydrofolate + NH4(+). Its function is as follows. The glycine cleavage system catalyzes the degradation of glycine. The polypeptide is Aminomethyltransferase (Anoxybacillus flavithermus (strain DSM 21510 / WK1)).